Reading from the N-terminus, the 136-residue chain is MGARKRISAEARKEAQKTMYFAKLNNVPTSPRKMRLVADMIRGMEVFRALGVLKFSNKEAAARVEKLLRSAIANWEQKNERKAEAGELCVSSISVDCATTLKRMRPAPQGRGYRIRKRSNHVTLFVDTLSKNDSQN.

This sequence belongs to the universal ribosomal protein uL22 family. Part of the 50S ribosomal subunit.

Functionally, this protein binds specifically to 23S rRNA; its binding is stimulated by other ribosomal proteins, e.g. L4, L17, and L20. It is important during the early stages of 50S assembly. It makes multiple contacts with different domains of the 23S rRNA in the assembled 50S subunit and ribosome. In terms of biological role, the globular domain of the protein is located near the polypeptide exit tunnel on the outside of the subunit, while an extended beta-hairpin is found that lines the wall of the exit tunnel in the center of the 70S ribosome. The chain is Large ribosomal subunit protein uL22 from Parabacteroides distasonis (strain ATCC 8503 / DSM 20701 / CIP 104284 / JCM 5825 / NCTC 11152).